A 304-amino-acid polypeptide reads, in one-letter code: GTP cyclohydrolase FolE2 (304 aa).

This sequence belongs to the GTP cyclohydrolase IV family.

The catalysed reaction is GTP + H2O = 7,8-dihydroneopterin 3'-triphosphate + formate + H(+). Its pathway is cofactor biosynthesis; 7,8-dihydroneopterin triphosphate biosynthesis; 7,8-dihydroneopterin triphosphate from GTP: step 1/1. Its function is as follows. Converts GTP to 7,8-dihydroneopterin triphosphate. This is GTP cyclohydrolase FolE2 from Chromohalobacter salexigens (strain ATCC BAA-138 / DSM 3043 / CIP 106854 / NCIMB 13768 / 1H11).